Consider the following 113-residue polypeptide: TYRO protein tyrosine kinase-binding protein (113 aa).

The N-terminal stretch at 1–27 (MGGLEPCSRLLLLPLLLAVGGLRPVQA) is a signal peptide. Residues 28-40 (QAQSDCSCSTVSP) lie on the Extracellular side of the membrane. A helical membrane pass occupies residues 41–61 (GVLAGIVLGDLVLTVLIALAV). Asp-50 contacts Ca(2+). Residues 62 to 113 (YFLGRLVPRGRGAAEAATRKQRITETESPYQELQGQRSDVYSDLNTQRPYYK) are Cytoplasmic-facing. Residues 75 to 113 (AEAATRKQRITETESPYQELQGQRSDVYSDLNTQRPYYK) form a disordered region. In terms of domain architecture, ITAM spans 80–108 (RKQRITETESPYQELQGQRSDVYSDLNTQ). A compositionally biased stretch (polar residues) spans 87 to 113 (TESPYQELQGQRSDVYSDLNTQRPYYK). Phosphotyrosine occurs at positions 91 and 102.

Belongs to the TYROBP family. As to quaternary structure, homodimer; disulfide-linked. Homotrimer; disulfide-linked. Homotetramer; disulfide-linked. Homotrimers and homotetramers form when low levels of partner receptors are available and is competitive with assembly with interacting receptors. They may represent alternative oligomerization states or may be intermediates in the receptor assembly process. Binding of a metal cation aids in homooligomerization through coordination of the metal ion by the subunits of the oligomer. Interacts with TREM1. Interacts with TREM2. Interacts with CLECSF5. Interacts with CD300LB and CD300C2. Interacts with CD300E. Interacts (via ITAM domain) with SYK (via SH2 domains); activates SYK mediating neutrophils and macrophages integrin-mediated activation. Interacts with KLRC2. Interacts with CD300H. Interacts with KLRD1. Post-translationally, following ligand binding by associated receptors, tyrosine phosphorylated in the ITAM domain which leads to activation of additional tyrosine kinases and subsequent cell activation.

It is found in the cell membrane. Its function is as follows. Adapter protein which non-covalently associates with activating receptors found on the surface of a variety of immune cells to mediate signaling and cell activation following ligand binding by the receptors. TYROBP is tyrosine-phosphorylated in the ITAM domain following ligand binding by the associated receptors which leads to activation of additional tyrosine kinases and subsequent cell activation. Also has an inhibitory role in some cells. Non-covalently associates with activating receptors of the CD300 family to mediate cell activation. Also mediates cell activation through association with activating receptors of the CD200R family. Required for neutrophil activation mediated by integrin. Required for the activation of myeloid cells mediated by the CLEC5A/MDL1 receptor. Associates with natural killer (NK) cell receptors such as the KLRD1/KLRC2 heterodimer to mediate NK cell activation. Associates with TREM1 to mediate activation of neutrophils and monocytes. Associates with TREM2 on monocyte-derived dendritic cells to mediate up-regulation of chemokine receptor CCR7 and dendritic cell maturation and survival. Association with TREM2 mediates cytokine-induced formation of multinucleated giant cells which are formed by the fusion of macrophages. Stabilizes the TREM2 C-terminal fragment (TREM2-CTF) produced by TREM2 ectodomain shedding which suppresses the release of pro-inflammatory cytokines. In microglia, required with TREM2 for phagocytosis of apoptotic neurons. Required with ITGAM/CD11B in microglia to control production of microglial superoxide ions which promote the neuronal apoptosis that occurs during brain development. Promotes pro-inflammatory responses in microglia following nerve injury which accelerates degeneration of injured neurons. Positively regulates the expression of the IRAK3/IRAK-M kinase and IL10 production by liver dendritic cells and inhibits their T cell allosimulatory ability. Negatively regulates B cell proliferation. Required for CSF1-mediated osteoclast cytoskeletal organization. Positively regulates multinucleation during osteoclast development. The protein is TYRO protein tyrosine kinase-binding protein of Macaca mulatta (Rhesus macaque).